Reading from the N-terminus, the 448-residue chain is UDP-N-acetylmuramoylalanine--D-glutamate ligase (448 aa).

K17, S18, T38, R39, and G78 together coordinate UDP-N-acetyl-alpha-D-muramoyl-L-alanine. 116–122 (GSNAKST) contacts ATP. ADP-binding residues include A119, K120, S121, and T122. 2 residues coordinate UDP-N-acetyl-alpha-D-muramoyl-L-alanine: N143 and H188. ADP is bound by residues N278, R309, D324, and K326.

This sequence belongs to the MurCDEF family.

The protein resides in the cytoplasm. It carries out the reaction UDP-N-acetyl-alpha-D-muramoyl-L-alanine + D-glutamate + ATP = UDP-N-acetyl-alpha-D-muramoyl-L-alanyl-D-glutamate + ADP + phosphate + H(+). Its pathway is cell wall biogenesis; peptidoglycan biosynthesis. Its function is as follows. Involved in cell wall formation. Catalyzes the addition of D-glutamate to the peptidoglycan precursor UDP-N-acetylmuramoyl-L-alanine (UMA). The protein is UDP-N-acetylmuramoylalanine--D-glutamate ligase of Pseudomonas aeruginosa (strain ATCC 15692 / DSM 22644 / CIP 104116 / JCM 14847 / LMG 12228 / 1C / PRS 101 / PAO1).